We begin with the raw amino-acid sequence, 433 residues long: Gamma-glutamyl phosphate reductase (433 aa).

This sequence belongs to the gamma-glutamyl phosphate reductase family.

Its subcellular location is the cytoplasm. It carries out the reaction L-glutamate 5-semialdehyde + phosphate + NADP(+) = L-glutamyl 5-phosphate + NADPH + H(+). Its pathway is amino-acid biosynthesis; L-proline biosynthesis; L-glutamate 5-semialdehyde from L-glutamate: step 2/2. Functionally, catalyzes the NADPH-dependent reduction of L-glutamate 5-phosphate into L-glutamate 5-semialdehyde and phosphate. The product spontaneously undergoes cyclization to form 1-pyrroline-5-carboxylate. In Psychrobacter cryohalolentis (strain ATCC BAA-1226 / DSM 17306 / VKM B-2378 / K5), this protein is Gamma-glutamyl phosphate reductase.